A 201-amino-acid chain; its full sequence is Esterase TesA (201 aa).

A signal peptide spans 1–21 (MRALLLSGCLALVLLTQQAAA). The active-site Nucleophile is the Ser-30. Catalysis depends on residues Asp-177 and His-180.

This sequence belongs to the 'GDSL' lipolytic enzyme family.

The protein localises to the secreted. The enzyme catalyses a carboxylic ester + H2O = an alcohol + a carboxylate + H(+). Functionally, esterase that exhibits the highest activity towards Tween detergents and p-nitrophenyl esters of short acyl chain length. Also displays a low thioesterase activity towards palmitoyl-coenzyme A, but is not active towards acetyl-coenzyme A. In Pseudomonas aeruginosa (strain ATCC 15692 / DSM 22644 / CIP 104116 / JCM 14847 / LMG 12228 / 1C / PRS 101 / PAO1), this protein is Esterase TesA (tesA).